The primary structure comprises 402 residues: Protein FAM221B (402 aa).

Residues 1–35 (MEAHEIIEEPHITMDAEKHPPSKDPSAEDLQENHI) are compositionally biased toward basic and acidic residues. Disordered stretches follow at residues 1 to 205 (MEAH…TARP) and 378 to 402 (DTQKTRQRGGRPRGTDTVSNWHRPL). Composition is skewed to polar residues over residues 77–90 (EPSISETPSETPTY) and 393–402 (DTVSNWHRPL).

The protein belongs to the FAM221 family.

The sequence is that of Protein FAM221B (FAM221B) from Homo sapiens (Human).